A 349-amino-acid polypeptide reads, in one-letter code: Nicotinate-nucleotide--dimethylbenzimidazole phosphoribosyltransferase (349 aa).

The active-site Proton acceptor is glutamate 316.

The protein belongs to the CobT family.

The catalysed reaction is 5,6-dimethylbenzimidazole + nicotinate beta-D-ribonucleotide = alpha-ribazole 5'-phosphate + nicotinate + H(+). Its pathway is nucleoside biosynthesis; alpha-ribazole biosynthesis; alpha-ribazole from 5,6-dimethylbenzimidazole: step 1/2. Catalyzes the synthesis of alpha-ribazole-5'-phosphate from nicotinate mononucleotide (NAMN) and 5,6-dimethylbenzimidazole (DMB). This is Nicotinate-nucleotide--dimethylbenzimidazole phosphoribosyltransferase from Photorhabdus laumondii subsp. laumondii (strain DSM 15139 / CIP 105565 / TT01) (Photorhabdus luminescens subsp. laumondii).